Here is a 365-residue protein sequence, read N- to C-terminus: Membrane cofactor protein (365 aa).

A signal peptide spans 1–44 (MTAAPLMPDSTHPCRRRKSYTFFWCSLGVYAEALLFLLSHLSDA). Sushi domains follow at residues 45–106 (CELP…GCIK), 107–170 (VQCT…HCEK), 171–236 (IYCL…ECKV), and 237–296 (VKCP…KCLK). Over 45-329 (CELPRPFEAM…GIFSQELDAW (285 aa)) the chain is Extracellular. Disulfide bonds link Cys109/Cys151, Cys137/Cys168, Cys173/Cys221, Cys202/Cys234, Cys239/Cys281, and Cys267/Cys294. N-linked (GlcNAc...) asparagine glycosylation occurs at Asn181. O-linked (GalNAc...) threonine glycosylation is present at Thr205. O-linked (GalNAc...) threonine glycosylation is found at Thr301 and Thr304. Asn310 is a glycosylation site (N-linked (GlcNAc...) asparagine). A glycan (O-linked (GalNAc...) threonine) is linked at Thr312. A helical membrane pass occupies residues 330–350 (IIALIVITSIVGVFILCLIVL). The Cytoplasmic portion of the chain corresponds to 351 to 365 (RCFEHRKKTNVSAAR).

Interacts with C3b. Interacts with C4b. Interacts with moesin/MSN. Post-translationally, may be O-glycosylated. N-glycosylated. In terms of tissue distribution, present only in testis (at protein level).

It localises to the cytoplasmic vesicle. The protein localises to the secretory vesicle. It is found in the acrosome inner membrane. Its subcellular location is the secreted. May be involved in the fusion of the spermatozoa with the oocyte during fertilization. The polypeptide is Membrane cofactor protein (Cd46) (Mus musculus (Mouse)).